The chain runs to 379 residues: tRNA 2-selenouridine synthase (379 aa).

The Rhodanese domain occupies 17–140 (FLSGAPLLDT…MRRFLIESLE (124 aa)). Catalysis depends on cysteine 100, which acts as the S-selanylcysteine intermediate.

The protein belongs to the SelU family. As to quaternary structure, monomer.

It carries out the reaction 5-methylaminomethyl-2-thiouridine(34) in tRNA + selenophosphate + (2E)-geranyl diphosphate + H2O + H(+) = 5-methylaminomethyl-2-selenouridine(34) in tRNA + (2E)-thiogeraniol + phosphate + diphosphate. The enzyme catalyses 5-methylaminomethyl-2-thiouridine(34) in tRNA + (2E)-geranyl diphosphate = 5-methylaminomethyl-S-(2E)-geranyl-thiouridine(34) in tRNA + diphosphate. It catalyses the reaction 5-methylaminomethyl-S-(2E)-geranyl-thiouridine(34) in tRNA + selenophosphate + H(+) = 5-methylaminomethyl-2-(Se-phospho)selenouridine(34) in tRNA + (2E)-thiogeraniol. The catalysed reaction is 5-methylaminomethyl-2-(Se-phospho)selenouridine(34) in tRNA + H2O = 5-methylaminomethyl-2-selenouridine(34) in tRNA + phosphate. Involved in the post-transcriptional modification of the uridine at the wobble position (U34) of tRNA(Lys), tRNA(Glu) and tRNA(Gln). Catalyzes the conversion of 2-thiouridine (S2U-RNA) to 2-selenouridine (Se2U-RNA). Acts in a two-step process involving geranylation of 2-thiouridine (S2U) to S-geranyl-2-thiouridine (geS2U) and subsequent selenation of the latter derivative to 2-selenouridine (Se2U) in the tRNA chain. This chain is tRNA 2-selenouridine synthase, found in Hahella chejuensis (strain KCTC 2396).